Consider the following 147-residue polypeptide: D-aminoacyl-tRNA deacylase (147 aa).

The Gly-cisPro motif, important for rejection of L-amino acids motif lies at 137–138; that stretch reads GP.

This sequence belongs to the DTD family. In terms of assembly, homodimer.

Its subcellular location is the cytoplasm. It carries out the reaction glycyl-tRNA(Ala) + H2O = tRNA(Ala) + glycine + H(+). The enzyme catalyses a D-aminoacyl-tRNA + H2O = a tRNA + a D-alpha-amino acid + H(+). Functionally, an aminoacyl-tRNA editing enzyme that deacylates mischarged D-aminoacyl-tRNAs. Also deacylates mischarged glycyl-tRNA(Ala), protecting cells against glycine mischarging by AlaRS. Acts via tRNA-based rather than protein-based catalysis; rejects L-amino acids rather than detecting D-amino acids in the active site. By recycling D-aminoacyl-tRNA to D-amino acids and free tRNA molecules, this enzyme counteracts the toxicity associated with the formation of D-aminoacyl-tRNA entities in vivo and helps enforce protein L-homochirality. This Acinetobacter baumannii (strain AYE) protein is D-aminoacyl-tRNA deacylase.